Reading from the N-terminus, the 97-residue chain is Aspartyl/glutamyl-tRNA(Asn/Gln) amidotransferase subunit C (97 aa).

Belongs to the GatC family. In terms of assembly, heterotrimer of A, B and C subunits.

It catalyses the reaction L-glutamyl-tRNA(Gln) + L-glutamine + ATP + H2O = L-glutaminyl-tRNA(Gln) + L-glutamate + ADP + phosphate + H(+). The catalysed reaction is L-aspartyl-tRNA(Asn) + L-glutamine + ATP + H2O = L-asparaginyl-tRNA(Asn) + L-glutamate + ADP + phosphate + 2 H(+). In terms of biological role, allows the formation of correctly charged Asn-tRNA(Asn) or Gln-tRNA(Gln) through the transamidation of misacylated Asp-tRNA(Asn) or Glu-tRNA(Gln) in organisms which lack either or both of asparaginyl-tRNA or glutaminyl-tRNA synthetases. The reaction takes place in the presence of glutamine and ATP through an activated phospho-Asp-tRNA(Asn) or phospho-Glu-tRNA(Gln). This is Aspartyl/glutamyl-tRNA(Asn/Gln) amidotransferase subunit C from Picosynechococcus sp. (strain ATCC 27264 / PCC 7002 / PR-6) (Agmenellum quadruplicatum).